The chain runs to 424 residues: Mitogen-activated protein kinase 9 (424 aa).

In terms of domain architecture, Protein kinase spans 26–321 (YQQLKPIGSG…VDEALRHPYI (296 aa)). ATP contacts are provided by residues 32–40 (IGSGAQGIV) and Lys-55. Residue Asp-151 is the Proton acceptor of the active site. Thr-183 carries the post-translational modification Phosphothreonine; by MAP2K7. The TXY motif lies at 183–185 (TPY). Tyr-185 carries the phosphotyrosine; by MAP2K4 modification. Positions 368-424 (KNGVVKDQPSDAAVSSNATPSQSSSINDISSMSTEQTLASDTDSSLDASTGPLEGCR) are disordered. A compositionally biased stretch (low complexity) spans 388–417 (SQSSSINDISSMSTEQTLASDTDSSLDAST).

Belongs to the protein kinase superfamily. CMGC Ser/Thr protein kinase family. MAP kinase subfamily. As to quaternary structure, interacts with MECOM. Interacts with DCLK2. Binds to at least four scaffolding proteins, MAPK8IP1/JIP-1, MAPK8IP2/JIP-2, MAPK8IP3/JIP-3/JSAP1 and SPAG9/MAPK8IP4/JIP-4. These proteins also bind other components of the JNK signaling pathway. Interacts with NFATC4. Interacts with ATF7; the interaction does not phosphorylate ATF7 but acts as a docking site for ATF7-associated partners such as JUN. Interacts with BCL10. Interacts with CTNNB1 and GSK3B. Interacts with MAPKBP1. Interacts with POU5F1; phosphorylates POU5F1 at 'Ser-355'. Found in a complex with SH3RF1, RAC2, MAP3K7/TAK1, MAP2K7/MKK7, MAPK8IP1/JIP1 and MAPK8/JNK1. Requires Mg(2+) as cofactor. In terms of processing, dually phosphorylated on Thr-183 and Tyr-185 by MAP2K7 and MAP2K4, which activates the enzyme. Autophosphorylated in vitro.

The protein localises to the cytoplasm. Its subcellular location is the nucleus. It carries out the reaction L-seryl-[protein] + ATP = O-phospho-L-seryl-[protein] + ADP + H(+). The catalysed reaction is L-threonyl-[protein] + ATP = O-phospho-L-threonyl-[protein] + ADP + H(+). Its activity is regulated as follows. Activated by threonine and tyrosine phosphorylation by either of two dual specificity kinases, MAP2K4 and MAP2K7. MAP2K4 shows a strong preference for Tyr-185 while MAP2K7 phosphorylates Tyr-183 preferentially. Inhibited by dual specificity phosphatases, such as DUSP1. In terms of biological role, serine/threonine-protein kinase involved in various processes such as cell proliferation, differentiation, migration, transformation and programmed cell death. Extracellular stimuli such as pro-inflammatory cytokines or physical stress stimulate the stress-activated protein kinase/c-Jun N-terminal kinase (SAP/JNK) signaling pathway. In this cascade, two dual specificity kinases MAP2K4/MKK4 and MAP2K7/MKK7 phosphorylate and activate MAPK9/JNK2. In turn, MAPK9/JNK2 phosphorylates a number of transcription factors, primarily components of AP-1 such as JUN and ATF2 and thus regulates AP-1 transcriptional activity. In response to oxidative or ribotoxic stresses, inhibits rRNA synthesis by phosphorylating and inactivating the RNA polymerase 1-specific transcription initiation factor RRN3. Promotes stressed cell apoptosis by phosphorylating key regulatory factors including TP53 and YAP1. In T-cells, MAPK8 and MAPK9 are required for polarized differentiation of T-helper cells into Th1 cells. Upon T-cell receptor (TCR) stimulation, is activated by CARMA1, BCL10, MAP2K7 and MAP3K7/TAK1 to regulate JUN protein levels. Plays an important role in the osmotic stress-induced epithelial tight-junctions disruption. When activated, promotes beta-catenin/CTNNB1 degradation and inhibits the canonical Wnt signaling pathway. Also participates in neurite growth in spiral ganglion neurons. Phosphorylates the CLOCK-BMAL1 heterodimer and plays a role in the regulation of the circadian clock. Phosphorylates POU5F1, which results in the inhibition of POU5F1's transcriptional activity and enhances its proteasomal degradation. Phosphorylates ALKBH5 in response to reactive oxygen species (ROS), promoting ALKBH5 sumoylation and inactivation. MAPK9 isoforms display different binding patterns: alpha-1 and alpha-2 preferentially bind to JUN, whereas beta-1 and beta-2 bind to ATF2. However, there is no correlation between binding and phosphorylation, which is achieved at about the same efficiency by all isoforms. JUNB is not a substrate for JNK2 alpha-2, and JUND binds only weakly to it. The chain is Mitogen-activated protein kinase 9 (MAPK9) from Homo sapiens (Human).